The chain runs to 172 residues: uncharacterized protein (172 aa).

Residues 109–129 (MLLLYLYYNLLLLTASTPLTF) form a helical membrane-spanning segment.

It localises to the membrane. This is an uncharacterized protein from Saccharomyces cerevisiae (strain ATCC 204508 / S288c) (Baker's yeast).